Here is a 686-residue protein sequence, read N- to C-terminus: ATP-dependent zinc metalloprotease FTSH 6, chloroplastic (686 aa).

Positions 1-14 are enriched in polar residues; the sequence is MSPTAMSLTTTTSR. Positions 1–52 are disordered; sequence MSPTAMSLTTTTSRLPICRAQGGGVAKEKRTTPPPAKITPPSSSSSEAAGLS. A chloroplast-targeting transit peptide spans 1–75; that stretch reads MSPTAMSLTT…LGLTAARPAR (75 aa). Residues 39–52 show a composition bias toward low complexity; that stretch reads TPPSSSSSEAAGLS. Residues 164–184 form a helical membrane-spanning segment; sequence VMLLDLLVNFGFPLLFVASLL. 261 to 268 provides a ligand contact to ATP; sequence GPPGTGKT. A Zn(2+)-binding site is contributed by H483. E484 is an active-site residue. Zn(2+) is bound by residues H487 and D562.

The protein in the N-terminal section; belongs to the AAA ATPase family. It in the C-terminal section; belongs to the peptidase M41 family. The cofactor is Zn(2+).

The protein resides in the plastid. The protein localises to the chloroplast thylakoid membrane. Functionally, probable ATP-dependent zinc metallopeptidase. This Oryza sativa subsp. japonica (Rice) protein is ATP-dependent zinc metalloprotease FTSH 6, chloroplastic (FTSH6).